A 90-amino-acid chain; its full sequence is DNA-binding protein HU-alpha (90 aa).

It belongs to the bacterial histone-like protein family. Heterodimer of an alpha and a beta chain.

Functionally, histone-like DNA-binding protein which is capable of wrapping DNA to stabilize it, and thus to prevent its denaturation under extreme environmental conditions. The chain is DNA-binding protein HU-alpha (hupA) from Vibrio proteolyticus (Aeromonas proteolytica).